The chain runs to 641 residues: XK-related protein 6 (641 aa).

Disordered regions lie at residues 20 to 47 (LDEAVGSGGEEDGEPGGGGCGGGGDGSE) and 84 to 120 (RSAAADGGDQPLQPPAAPGAGRQPPTPSAARPEPPPP). Positions 34–46 (PGGGGCGGGGDGS) are enriched in gly residues. The segment covering 107–120 (PPTPSAARPEPPPP) has biased composition (pro residues). Transmembrane regions (helical) follow at residues 130–150 (LWIVLALLVFFGDVGTDLWLA), 159–179 (YVYFGLTLFFVLVPSLLVQSL), 318–338 (TLPCVSSVTSLMSLAWVLASY), 372–392 (VISFALFASIFQLYFGIFVVV), 413–433 (WEEILFNMVVGIVYIFCWFNV), 442–462 (MFAYYTIVLTENAALTFLWYF), and 473–493 (AVPALCCVFISFVAGIAMMLL).

This sequence belongs to the XK family.

It is found in the cell membrane. The chain is XK-related protein 6 from Homo sapiens (Human).